Reading from the N-terminus, the 202-residue chain is Thymidylate kinase (202 aa).

7–14 provides a ligand contact to ATP; sequence GIDGSGKT.

This sequence belongs to the thymidylate kinase family.

The catalysed reaction is dTMP + ATP = dTDP + ADP. Functionally, phosphorylation of dTMP to form dTDP in both de novo and salvage pathways of dTTP synthesis. The protein is Thymidylate kinase of Ehrlichia ruminantium (strain Gardel).